Reading from the N-terminus, the 1159-residue chain is Cation channel sperm-associated auxiliary subunit gamma (1159 aa).

An N-terminal signal peptide occupies residues 1-35 (MCGPAMFPAGPRWPRVRVLQVLWALLAVLLASRRL). Residues 36–1065 (WAIKDFEECT…IHGLPLSPKR (1030 aa)) are Extracellular-facing. 2 disulfide bridges follow: cysteine 44-cysteine 105 and cysteine 159-cysteine 165. Asparagine 102 carries N-linked (GlcNAc...) asparagine glycosylation. An N-linked (GlcNAc...) asparagine glycan is attached at asparagine 177. Cysteines 288 and 343 form a disulfide. A glycan (N-linked (GlcNAc...) asparagine) is linked at asparagine 355. Cysteines 394 and 402 form a disulfide. Residues asparagine 426 and asparagine 574 are each glycosylated (N-linked (GlcNAc...) asparagine). 5 cysteine pairs are disulfide-bonded: cysteine 638-cysteine 860, cysteine 806-cysteine 834, cysteine 882-cysteine 1046, cysteine 909-cysteine 918, and cysteine 1010-cysteine 1016. Residues 1066-1087 (ALFILMVSLSVFVGLVIFYIAF) traverse the membrane as a helical segment. The Cytoplasmic portion of the chain corresponds to 1088-1159 (CLLWPLVVKG…KEAVERQLMT (72 aa)). Positions 1138–1159 (FSSRMTEDKAEPKEAVERQLMT) are disordered. Positions 1142–1159 (MTEDKAEPKEAVERQLMT) are enriched in basic and acidic residues.

This sequence belongs to the CATSPERG family. In terms of assembly, component of the CatSper complex or CatSpermasome composed of the core pore-forming members CATSPER1, CATSPER2, CATSPER3 and CATSPER4 as well as auxiliary members CATSPERB, CATSPERG, CATSPERD, CATSPERE, CATSPERZ, SCLO6C1, TMEM249, TMEM262 and EFCAB9. HSPA1 may be an additional auxiliary complex member. The core complex members CATSPER1, CATSPER2, CATSPER3 and CATSPER4 form a heterotetrameric channel. The auxiliary CATSPERB, CATSPERG, CATSPERD and CATSPERE subunits form a pavilion-like structure over the pore which stabilizes the complex through interactions with CATSPER4, CATSPER3, CATSPER1 and CATSPER2 respectively. TMEM262/CATSPERH interacts with CATSPERB, further stabilizing the complex. C2CD6/CATSPERT interacts at least with CATSPERD and is required for targeting the CatSper complex in the flagellar membrane.

It localises to the cell projection. It is found in the cilium. Its subcellular location is the flagellum membrane. Its function is as follows. Auxiliary component of the CatSper complex, a complex involved in sperm cell hyperactivation. Sperm cell hyperactivation is needed for sperm motility which is essential late in the preparation of sperm for fertilization. The sequence is that of Cation channel sperm-associated auxiliary subunit gamma from Macaca fascicularis (Crab-eating macaque).